A 95-amino-acid polypeptide reads, in one-letter code: Small ribosomal subunit protein bS6 (95 aa).

It belongs to the bacterial ribosomal protein bS6 family.

Binds together with bS18 to 16S ribosomal RNA. This Bacillus velezensis (strain DSM 23117 / BGSC 10A6 / LMG 26770 / FZB42) (Bacillus amyloliquefaciens subsp. plantarum) protein is Small ribosomal subunit protein bS6.